The following is a 912-amino-acid chain: Accessory gland protein Acp36DE (912 aa).

The signal sequence occupies residues Met-1–Ser-23. Low complexity-rich tracts occupy residues Gln-193–Ser-220, Ser-230–Gln-255, Lys-271–Gln-324, and Gln-521–Gln-544. Disordered stretches follow at residues Gln-193–Gln-255, Lys-271–Leu-349, Thr-518–Gln-544, Pro-638–Gly-671, and Gly-732–Gly-912. Composition is skewed to low complexity over residues Gly-732–Gln-757 and Gln-765–Thr-785. Over residues Arg-803–Gln-818 the composition is skewed to basic and acidic residues. Low complexity predominate over residues Ser-821–Ser-845. Over residues Glu-851–Asp-861 the composition is skewed to polar residues. Over residues Gln-862 to Ser-897 the composition is skewed to low complexity. Over residues Lys-898 to Gly-912 the composition is skewed to polar residues.

Post-translationally, proteolytically cleaved by the seminal metalloprotease Semp1. Cleavage appears to take place in the mated female. In terms of tissue distribution, detected in the male accessory glands (at protein level). Produced in the accessory glands and secreted into seminal fluid.

The protein localises to the secreted. Its function is as follows. Responsible for physiological and behavioral changes in mated female flies. Associates with sperm and localizes to specific regions of the female reproductive tract, including the sperm storage organs. It accelerates sperm accumulation into storage but does not mediate the entry of the first sperm into storage. Once sperm storage has initiated it seems to act as a guidance factor helping subsequent sperm move into storage, a corral concentrating sperm around the SSO entrances and/or a trigger for responses within the female that accelerate storage of sperm. The protein is Accessory gland protein Acp36DE (Acp36DE) of Drosophila melanogaster (Fruit fly).